The chain runs to 256 residues: uncharacterized protein (256 aa).

It to B.subtilis LplA.

This is an uncharacterized protein from Niallia circulans (Bacillus circulans).